The sequence spans 982 residues: Mineralocorticoid receptor (982 aa).

A modulating region spans residues 1–601; the sequence is METKGYHSLP…STGSSRPSKI (601 aa). Polar residues predominate over residues 230 to 242; the sequence is QGTPLTCSPNVEN. Disordered regions lie at residues 230–328 and 345–375; these read QGTP…AAST and SGTSAGSSTSRDVVPSPDTQEKGAQEVPFPK. Ser-249, Ser-258, Ser-282, Ser-286, and Ser-298 each carry phosphoserine. A compositionally biased stretch (low complexity) spans 258–299; that stretch reads SPLSSPLSSMKSSISSPPSHCSVKSPVSSPNNVTPRSSVSSP. Residues 300–328 show a composition bias toward polar residues; sequence ANINNSRCSVSSPSNTNNRSTLSSPAAST. Low complexity predominate over residues 345-354; sequence SGTSAGSSTS. Positions 602, 605, 619, 622, 638, 644, 654, and 657 each coordinate Zn(2+). 2 consecutive NR C4-type zinc fingers follow at residues 602–622 and 638–662; these read CLVCGDEASGCHYGVVTCGSC and CAGRNDCIIDKIRRKNCPACRLQKC. The segment at residues 602 to 667 is a DNA-binding region (nuclear receptor); sequence CLVCGDEASG…RLQKCLQAGM (66 aa). The segment at 668 to 723 is hinge; sequence NLGARRSKKLGKLKGIHEEQPQQQPPPPPPPPQSPEEGTTYIAPAKEPSVNTALVP. The tract at residues 682-708 is disordered; that stretch reads GIHEEQPQQQPPPPPPPPQSPEEGTTY. Over residues 690–701 the composition is skewed to pro residues; it reads QQPPPPPPPPQS. One can recognise an NR LBD domain in the interval 724–962; that stretch reads QLSAISRALT…EFPAMLVEII (239 aa). 21-hydroxyprogesterone-binding residues include Asn-768 and Gln-774. Aldosterone contacts are provided by Asn-768 and Gln-774. Progesterone-binding residues include Asn-768 and Gln-774. Positions 780–783 are important for coactivator binding; sequence KWAK. 2 residues coordinate 21-hydroxyprogesterone: Arg-815 and Thr-943. Aldosterone is bound by residues Arg-815 and Thr-943. Progesterone-binding residues include Arg-815 and Thr-943.

Belongs to the nuclear hormone receptor family. NR3 subfamily. Phosphorylated. As to expression, expressed in hippocampus, being restricted to the more superficial cortical layers.

Its subcellular location is the cytoplasm. The protein resides in the nucleus. Functionally, receptor for both mineralocorticoids (MC) such as aldosterone and glucocorticoids (GC) such as corticosterone or cortisol. Binds to mineralocorticoid response elements (MRE) and transactivates target genes. The effect of MC is to increase ion and water transport and thus raise extracellular fluid volume and blood pressure and lower potassium levels. This is Mineralocorticoid receptor (NR3C2) from Saimiri sciureus (Common squirrel monkey).